We begin with the raw amino-acid sequence, 170 residues long: Peptide deformylase (170 aa).

Positions 94 and 136 each coordinate Fe cation. E137 is an active-site residue. H140 is a Fe cation binding site.

The protein belongs to the polypeptide deformylase family. Fe(2+) is required as a cofactor.

It carries out the reaction N-terminal N-formyl-L-methionyl-[peptide] + H2O = N-terminal L-methionyl-[peptide] + formate. Functionally, removes the formyl group from the N-terminal Met of newly synthesized proteins. Requires at least a dipeptide for an efficient rate of reaction. N-terminal L-methionine is a prerequisite for activity but the enzyme has broad specificity at other positions. The protein is Peptide deformylase of Wolinella succinogenes (strain ATCC 29543 / DSM 1740 / CCUG 13145 / JCM 31913 / LMG 7466 / NCTC 11488 / FDC 602W) (Vibrio succinogenes).